We begin with the raw amino-acid sequence, 468 residues long: 3-isopropylmalate dehydratase large subunit (468 aa).

The [4Fe-4S] cluster site is built by Cys347, Cys407, and Cys410.

Belongs to the aconitase/IPM isomerase family. LeuC type 1 subfamily. In terms of assembly, heterodimer of LeuC and LeuD. It depends on [4Fe-4S] cluster as a cofactor.

It carries out the reaction (2R,3S)-3-isopropylmalate = (2S)-2-isopropylmalate. It functions in the pathway amino-acid biosynthesis; L-leucine biosynthesis; L-leucine from 3-methyl-2-oxobutanoate: step 2/4. Functionally, catalyzes the isomerization between 2-isopropylmalate and 3-isopropylmalate, via the formation of 2-isopropylmaleate. The polypeptide is 3-isopropylmalate dehydratase large subunit (Campylobacter jejuni (strain RM1221)).